We begin with the raw amino-acid sequence, 148 residues long: Small ribosomal subunit protein uS15 (148 aa).

The protein belongs to the universal ribosomal protein uS15 family.

The polypeptide is Small ribosomal subunit protein uS15 (RPS13) (Encephalitozoon cuniculi (strain GB-M1) (Microsporidian parasite)).